The chain runs to 225 residues: Uracil-DNA glycosylase (225 aa).

The active-site Proton acceptor is the Asp-65.

This sequence belongs to the uracil-DNA glycosylase (UDG) superfamily. UNG family.

The protein resides in the cytoplasm. It catalyses the reaction Hydrolyzes single-stranded DNA or mismatched double-stranded DNA and polynucleotides, releasing free uracil.. In terms of biological role, excises uracil residues from the DNA which can arise as a result of misincorporation of dUMP residues by DNA polymerase or due to deamination of cytosine. This is Uracil-DNA glycosylase from Bacillus cereus (strain G9842).